Here is a 404-residue protein sequence, read N- to C-terminus: Zinc finger protein zfs1 (404 aa).

The segment covering 134 to 149 has biased composition (polar residues); sequence SYLHSGSSPHGNTSNH. 2 disordered regions span residues 134 to 168 and 259 to 322; these read SYLH…TGSG and SNAS…APNG. The span at 150–168 shows a compositional bias: low complexity; the sequence is PSPISSLESLPSRSSTGSG. Residues 259-283 show a composition bias toward polar residues; sequence SNASIRNAPSNLSKQFSPSGNSPLT. Positions 304 to 317 are enriched in low complexity; that stretch reads GSASHPHGSGSSNG. 2 consecutive C3H1-type zinc fingers follow at residues 326–354 and 364–392; these read LYKT…HGNQ and KYKS…HDES.

In terms of assembly, interacts with moc3.

Its subcellular location is the cytoplasm. It localises to the nucleus. Its function is as follows. Binds to specific AU-rich elements (ARE) in the 3'-untranslated region of target mRNAs and promotes their degradation. Binds to ARE present in the arz1 mRNA and stimulates the rate of arz1 mRNA decay. Required for coordination of septum formation with exit from mitosis. Involved in the mating response pathway. Induces sexual development and ascus formation. This chain is Zinc finger protein zfs1 (zfs1), found in Schizosaccharomyces pombe (strain 972 / ATCC 24843) (Fission yeast).